Consider the following 64-residue polypeptide: Large ribosomal subunit protein eL37 (64 aa).

Cys-20, Cys-23, Cys-35, and Cys-38 together coordinate Zn(2+). Residues 20-38 (CRRCGRRAYHVRKKACAAC) form a C4-type zinc finger.

It belongs to the eukaryotic ribosomal protein eL37 family. Requires Zn(2+) as cofactor.

In terms of biological role, binds to the 23S rRNA. The polypeptide is Large ribosomal subunit protein eL37 (Methanococcus vannielii (strain ATCC 35089 / DSM 1224 / JCM 13029 / OCM 148 / SB)).